The chain runs to 746 residues: Ribosome biogenesis protein BOP1 (746 aa).

Residues 1 to 116 form a disordered region; sequence MAGSRGAGRT…PCPRTEMASA (116 aa). Over residues 43–65 the composition is skewed to low complexity; that stretch reads SHSTGSDSGVSDSEESVFSGLED. Residues 66 to 87 show a composition bias toward acidic residues; sequence SGSDSSEDDDEGDEEGEDGALD. Basic and acidic residues predominate over residues 88-99; that stretch reads DEGHSGIKKTTE. Thr106 carries the post-translational modification Phosphothreonine. Tyr122 is modified (phosphotyrosine). Phosphoserine occurs at positions 126 and 127. Positions 265-427 are sufficient for nucleolar localization; the sequence is MGWIQPRRPR…CLSVSPGGQW (163 aa). WD repeat units lie at residues 411-450, 452-492, 532-576, 577-615, 618-657, 661-700, and 716-746; these read GHSD…CVRT, PVGG…RLVA, CHGK…SPFR, RSHG…LTKK, PNCK…KPYR, HHKK…DLLQ, and TRDL…RLFT.

This sequence belongs to the WD repeat BOP1/ERB1 family. Component of the PeBoW complex, composed of BOP1, PES1 and WDR12. The complex is held together by BOP1, which interacts with PES1 via its N-terminal domain and with WDR12 via a high-affinity interaction between the seven-bladed beta-propeller domains of the 2 proteins. The NOP7 complex associates with the 66S pre-ribosome. The PeBoW complex associates with DDX27, BOP1 interacts directly with DDX27.

Its subcellular location is the nucleus. The protein resides in the nucleolus. It localises to the nucleoplasm. In terms of biological role, component of the PeBoW complex, which is required for maturation of 28S and 5.8S ribosomal RNAs and formation of the 60S ribosome. This chain is Ribosome biogenesis protein BOP1, found in Homo sapiens (Human).